The following is a 211-amino-acid chain: MAKVLYITAHPHDEKTSYSMATGKAFIDSYKESNPNDEVVHIDLYKENIPHIDADVFSGWGKLQSGTGFEELSENEKAKVGRLNELSDQFAAADKYVFVTPLWNFSFPPVMKAYLDSVAVAGKSFKYTEQGPIGLLTDKKALHIQARGGYYSEGPAADMEMGHRYIGIMMNFFGVPSFDGLIVEGHNAEPNKAQQIKEDAIARAKEAGKSF.

17–19 contributes to the FMN binding site; it reads SYS.

This sequence belongs to the azoreductase type 1 family. As to quaternary structure, homodimer. The cofactor is FMN.

The catalysed reaction is 2 a quinone + NADH + H(+) = 2 a 1,4-benzosemiquinone + NAD(+). It carries out the reaction N,N-dimethyl-1,4-phenylenediamine + anthranilate + 2 NAD(+) = 2-(4-dimethylaminophenyl)diazenylbenzoate + 2 NADH + 2 H(+). Functionally, quinone reductase that provides resistance to thiol-specific stress caused by electrophilic quinones. Its function is as follows. Also exhibits azoreductase activity. Catalyzes the reductive cleavage of the azo bond in aromatic azo compounds to the corresponding amines. This chain is FMN-dependent NADH:quinone oxidoreductase, found in Bacillus velezensis (strain DSM 23117 / BGSC 10A6 / LMG 26770 / FZB42) (Bacillus amyloliquefaciens subsp. plantarum).